A 372-amino-acid polypeptide reads, in one-letter code: MEKRRGPPPCQSEEGCSNSAKIRKAKNGAQLCGPCFSKSFEDDVHETIINNNLFKRGERVAIGASGGKDSTVLAFVMKTLNDRHDYGLDLQLLSIDEGIKGYRDDSLLAVEKNRVEYGLPLTILSYNDLYGWTMDDIVAKIGKKNNCTFCGVFRRQALDRGAFKIGATKLVTGHNADDMAETVLMNVLRGDIARLERCTNIVTGEEGDLPRAKPLKYCFERDIVMYARSNQLEYFYTECIYAPNAYRGYARKYVRDLEKVHPRAILDLIRSGEKVSVKKEVEMPTLKTCERCGYMTSQKMCKACLLIEGLNTGNTDLGVRKSKKTKKVIVETEGGKKEDGGCGSGGGGCGCAGAADETENEETRKRLKDLQF.

Residues 335 to 372 form a disordered region; the sequence is GKKEDGGCGSGGGGCGCAGAADETENEETRKRLKDLQF. Over residues 341–351 the composition is skewed to gly residues; sequence GCGSGGGGCGC. Residues 361–372 show a composition bias toward basic and acidic residues; it reads EETRKRLKDLQF.

This sequence belongs to the TtcA family. CTU1/NCS6/ATPBD3 subfamily.

It localises to the cytoplasm. The protein operates within tRNA modification; 5-methoxycarbonylmethyl-2-thiouridine-tRNA biosynthesis. Functionally, plays a central role in 2-thiolation of mcm(5)S(2)U at tRNA wobble positions of tRNA(Lys), tRNA(Glu) and tRNA(Gln). Directly binds tRNAs and probably acts by catalyzing adenylation of tRNAs, an intermediate required for 2-thiolation. It is unclear whether it acts as a sulfurtransferase that transfers sulfur from thiocarboxylated URM1 onto the uridine of tRNAs at wobble position. The sequence is that of Cytoplasmic tRNA 2-thiolation protein 1 from Caenorhabditis briggsae.